The primary structure comprises 612 residues: MPFTLPESKIAIDIDFDPDHLRQRFEADKQARERKDQLAQFQGLDDVLEVDDSDPFSEPITREPVTEELDALVLGGGFGGLTAGAYLTQNGVENFRLVEYGGDFGGTWYWNRYPGVQCDIESHIYMPLLEETGYVPSQRYADGSEIFEHAQRIGRHYGLYDRTYFQTRATHARWDEQIQRWEVTTDRGDRFVTRVLLRSNGALTKPQLPKVPGIGDFEGKIFHTSRWDYGYTGGSAAGDLAHLRDKRVAVVGTGATGVQVVPYLAQDAKELVVVQRTPSVVQPRNNRKTDPEWVASLTPGWQYERHDNFNGIISGHEVEGNLVDDGWTHLFPELTGQHLVDVPVGELPEGDQALVAELADMNLLMSAHARVDSIVTDPATADGLKPWFGYMCKRPCFNDEYLEAFNRPNVTLAASPAGIDGITSSGIVVAGTHYEVDCIIFATGFETGSGPAGIYGYDVIGREGHSMQEYFSEGARTFHGFFTHGFPNFVELGMSQTAYYVNFVYMLDRKARHAARLVRHLLDSGIGTFEPTAEAEADWVAEVRRSNEPREAYWGACTPGYYNGQGEVSKAVFRDVYNSSEIDFWNMIEAWWNSGRFEGLVFEPARDAVPVA.

Residues glutamate 99, 107-110 (TWYW), aspartate 119, tyrosine 125, and alanine 169 contribute to the FAD site. NADP(+) is bound at residue 117 to 119 (QCD). Residues 253-259 (TGATGVQ), 276-277 (RT), and 393-394 (KR) each bind NADP(+).

It belongs to the FAD-binding monooxygenase family. FAD is required as a cofactor.

In terms of biological role, catalyzes a Baeyer-Villiger oxidation reaction, i.e. the insertion of an oxygen atom into a carbon-carbon bond adjacent to a carbonyl, which converts ketones to esters or lactones using NADPH as an electron donor. Has a broad substrate scope and oxidizes different compounds including substituted and unsubstituted alicyclic, bicyclic-, aliphatic-ketones, ketones with an aromatic moiety, and sulfides. The highest activities are measured for 2- and 3-methylcyclohexanone, phenylacetone, bicyclo[3.2.0]hept-2-en-6-one and menthone. Cannot use NADH instead of NADPH. Is not active on benzaldehyde. This chain is Baeyer-Villiger monooxygenase 4, found in Dietzia sp. (strain D5).